Consider the following 221-residue polypeptide: Putative 5'(3')-deoxyribonucleotidase R824 (221 aa).

The Mg(2+) site is built by D16 and D18. Catalysis depends on D18, which acts as the Nucleophile. Phosphate contacts are provided by D18, S103, and K138. Residue D149 coordinates Mg(2+).

This sequence belongs to the 5'(3')-deoxyribonucleotidase family. It depends on Mg(2+) as a cofactor.

Functionally, dephosphorylates the 5' and 2'(3')-phosphates of deoxyribonucleotides. The sequence is that of Putative 5'(3')-deoxyribonucleotidase R824 from Acanthamoeba polyphaga mimivirus (APMV).